The sequence spans 413 residues: Serine/threonine transporter SstT (413 aa).

The next 8 membrane-spanning stretches (helical) occupy residues 19–39 (IFIG…LQNV), 61–81 (AVAP…KKIG), 89–109 (IIVL…IAGF), 148–168 (ALFK…GLAL), 189–209 (IVYV…SETL), 223–243 (LLAV…PILV), 297–317 (IPLG…ILTL), and 325–345 (IQIS…CACG).

It belongs to the dicarboxylate/amino acid:cation symporter (DAACS) (TC 2.A.23) family.

The protein resides in the cell inner membrane. It catalyses the reaction L-serine(in) + Na(+)(in) = L-serine(out) + Na(+)(out). The catalysed reaction is L-threonine(in) + Na(+)(in) = L-threonine(out) + Na(+)(out). Involved in the import of serine and threonine into the cell, with the concomitant import of sodium (symport system). The polypeptide is Serine/threonine transporter SstT (Pasteurella multocida (strain Pm70)).